Consider the following 184-residue polypeptide: Lactoylglutathione lyase (184 aa).

N-acetylalanine is present on A2. A disulfide bond links C19 and C20. The VOC domain maps to 31 to 177 (LLQQTMLRIK…DGYWIEILNP (147 aa)). Substrate contacts are provided by Q34 and R38. Residue Q34 coordinates Zn(2+). E100 contributes to the Zn(2+) binding site. A substrate-binding site is contributed by N104. A Phosphothreonine modification is found at T107. R123 and H127 together coordinate substrate. H127 contributes to the Zn(2+) binding site. Position 139 is an S-glutathionyl cysteine (C139). K148 carries the N6-acetyllysine; alternate modification. K148 carries the post-translational modification N6-succinyllysine; alternate. 157-158 (KM) is a binding site for substrate. A Zn(2+)-binding site is contributed by E173. The active-site Proton donor/acceptor is E173.

The protein belongs to the glyoxalase I family. Homodimer. Zn(2+) serves as cofactor. In terms of processing, glutathionylation at Cys-139 inhibits enzyme activity. Phosphorylated at Thr-107 in the presence of CaMK2. However, this is a consensus site for phosphorylation by CK2 so phosphorylation may be mediated by CK2 rather than CaMK2. Phosphorylation is induced by TNF and suppresses the TNF-induced transcriptional activity of NF-kappa-B. Post-translationally, exists in a nitric oxide (NO)-modified form. The exact nature of the modification is unknown, but it suppresses the TNF-induced transcriptional activity of NF-kappa-B.

The enzyme catalyses (R)-S-lactoylglutathione = methylglyoxal + glutathione. Its pathway is secondary metabolite metabolism; methylglyoxal degradation; (R)-lactate from methylglyoxal: step 1/2. Functionally, catalyzes the conversion of hemimercaptal, formed from methylglyoxal and glutathione, to S-lactoylglutathione. Involved in the regulation of TNF-induced transcriptional activity of NF-kappa-B. Required for normal osteoclastogenesis. The sequence is that of Lactoylglutathione lyase (Glo1) from Rattus norvegicus (Rat).